The following is a 177-amino-acid chain: Large ribosomal subunit protein uL6 (177 aa).

This sequence belongs to the universal ribosomal protein uL6 family. In terms of assembly, part of the 50S ribosomal subunit.

This protein binds to the 23S rRNA, and is important in its secondary structure. It is located near the subunit interface in the base of the L7/L12 stalk, and near the tRNA binding site of the peptidyltransferase center. This is Large ribosomal subunit protein uL6 from Polynucleobacter necessarius subsp. necessarius (strain STIR1).